A 294-amino-acid polypeptide reads, in one-letter code: Cytidine deaminase (294 aa).

2 consecutive CMP/dCMP-type deaminase domains span residues 48-168 (DEDA…FGPK) and 186-294 (LTGD…VLLA). A substrate-binding site is contributed by 89–91 (NME). Zn(2+) is bound at residue His102. Glu104 (proton donor) is an active-site residue. Zn(2+) is bound by residues Cys129 and Cys132.

Belongs to the cytidine and deoxycytidylate deaminase family. In terms of assembly, homodimer. It depends on Zn(2+) as a cofactor.

It catalyses the reaction cytidine + H2O + H(+) = uridine + NH4(+). It carries out the reaction 2'-deoxycytidine + H2O + H(+) = 2'-deoxyuridine + NH4(+). Functionally, this enzyme scavenges exogenous and endogenous cytidine and 2'-deoxycytidine for UMP synthesis. In Shigella dysenteriae serotype 1 (strain Sd197), this protein is Cytidine deaminase.